We begin with the raw amino-acid sequence, 428 residues long: Zinc metalloproteinase nas-27 (428 aa).

The first 17 residues, 1–17 (MQILPIFFPLLITSLHA), serve as a signal peptide directing secretion. Positions 18-57 (IPRGRRAVRNRNEGDINSLVGVGQYLYQGDIAVVKSRARR) are excised as a propeptide. The 198-residue stretch at 58–255 (AVIRQKHKKW…SRMNVLYNCH (198 aa)) folds into the Peptidase M12A domain. Cystine bridges form between Cys99–Cys254, Cys120–Cys141, Cys258–Cys276, Cys281–Cys290, Cys306–Cys339, and Cys366–Cys386. His150 provides a ligand contact to Zn(2+). Residue Glu151 is part of the active site. Zn(2+)-binding residues include His154 and His160. Residue Asn181 is glycosylated (N-linked (GlcNAc...) asparagine). The EGF-like domain maps to 250-291 (VLYNCHERCANTLNRCQQGGYPAPSDCSQCVCPDGFGGNFCE). The CUB domain maps to 306-428 (CGGVLWASET…LDFNIEYRAV (123 aa)). Asn377 carries N-linked (GlcNAc...) asparagine glycosylation.

Requires Zn(2+) as cofactor.

Its subcellular location is the secreted. In terms of biological role, metalloprotease. This is Zinc metalloproteinase nas-27 (nas-27) from Caenorhabditis elegans.